A 351-amino-acid chain; its full sequence is Ion-translocating oxidoreductase complex subunit D (351 aa).

A run of 4 helical transmembrane segments spans residues 18–38 (IMLL…YFFG), 40–60 (GSLI…GAVL), 87–107 (LPPL…IVIA), and 121–141 (PAMV…TSWL). Residue Thr185 is modified to FMN phosphoryl threonine. The next 5 helical transmembrane spans lie at 211–231 (VLAG…GLLL), 241–261 (IPVS…MIAP), 264–284 (FASP…FFIA), 298–318 (LIFG…GGYP), and 320–340 (GVAF…HYTQ).

It belongs to the NqrB/RnfD family. In terms of assembly, the complex is composed of six subunits: RnfA, RnfB, RnfC, RnfD, RnfE and RnfG. The cofactor is FMN.

The protein resides in the cell inner membrane. Functionally, part of a membrane-bound complex that couples electron transfer with translocation of ions across the membrane. This Yersinia pseudotuberculosis serotype I (strain IP32953) protein is Ion-translocating oxidoreductase complex subunit D.